A 2523-amino-acid polypeptide reads, in one-letter code: MSFVVMPPEINSLLIYTGAGPGPLLAAAAAWDELAAELGSAAAAFGSVTSGLVGGIWQGPSSVAMAAAAAPYAGWLSAAAASAESAAGQARAVVGVFEAALAETVDPFVIAANRSRLVSLALSNLFGQNTPAIAAAEFDYELMWAQDVAAMLGYHTGASAAAEALAPFGSPLASLAAAAEPAKSLAVNLGLANVGLFNAGSGNVGSYNVGAGNVGSYNVGGGNIGGNNVGLGNVGWGNFGLGNSGLTPGLMGLGNIGFGNAGSYNFGLANMGVGNIGFANTGSGNFGIGLTGDNLTGFGGFNTGSGNVGLFNSGTGNVGFFNSGTGNWGVFNSGSYNTGIGNSGIASTGLFNAGGFNTGVVNAGSYNTGSFNAGEANTGGFNPGSVNTGWLNTGDINTGVANSGDVNTGAFISGNYSNGVLWRGDYQGLLGFSSGANVLPVIPLSLDINGGVGAITIEPIHILPDIPININETLYLGPLVVPPINVPAISLGVGIPNISIGPIKINPITLWPAQNFNQTITLAWPVSSITIPQIQQVALSPSPIPTTLIGPIHINTGFSIPVTFSYSTPALTLFPVGLSIPTGGPLTLTLGVTAGTEAFTIPGFSIPEQPLPLAINVIGHINALSTPAITIDNIPLNLHAIGGVGPVDIVGGNVPASPGFGNSTTAPSSGFFNTGAGGVSGFGNVGAHTSGWFNQSTQAMQVLPGTVSGYFNSGTLMSGIGNVGTQLSGMLSGGALGGNNFGLGNIGFDNVGFGNAGSSNFGLANMGIGNIGLANTGNGNIGIGLSGDNLTGFGGFNSGSENVGLFNSGTGNVGFFNSGTGNLGVFNSGSHNTGFFLTGNNINVLAPFTPGTLFTISEIPIDLQVIGGIGPIHVQPIDIPAFDIQITGGFIGIREFTLPEITIPAIPIHVTGTVGLEGFHVNPAFVLFGQTAMAEITADPVVLPDPFITIDHYGPPLGPPGAKFPSGSFYLSISDLQINGPIIGSYGGPGTIPGPFGATFNLSTSSLALFPAGLTVPDQTPVTVNLTGGLDSITLFPGGLAFPENPVVSLTNFSVGTGGFTVFPQGFTVDRIPVDLHTTLSIGPFPFRWDYIPPTPANGPIPAVPGGFGLTSGLFPFHFTLNGGIGPISIPTTTVVDALNPLLTVTGNLEVGPFTVPDIPIPAINFGLDGNVNVSFNAPATTLLSGLGITGSIDISGIQITNIQTQPAQLFMSVGQTLFLFDFRDGIELNPIVIPGSSIPITMAGLSIPLPTVSESIPLNFSFGSPASTVKSMILHEILPIDVSINLEDAVFIPATVLPAIPLNVDVTIPVGPINIPIITEPGSGNSTTTTSDPFSGLAVPGLGVGLLGLFDGSIANNLISGFNSAVGIVGPNVGLSNLGGGNVGLGNVGDFNLGAGNVGGFNVGGGNIGGNNVGLGNVGFGNVGLANSGLTPGLMGLGNIGFGNAGSYNFGLANMGVGNIGFANTGSGNFGIGLTGDNLTGFGGFNTGSGNVGLFNSGTGNVGFFNSGTGNWGVFNSGSYNTGIGNSGIASTGLFNAGGFNTGVVNAGSYNTGSFNAGQANTGGFNPGSVNTGWLNTGDINTGVANSGDVNTGAFISGNYSNGAFWRGDYQGLLGFSYRPAVLPQTPFLDLTLTGGLGSVVIPAIDIPAIRPEFSANVAIDSFTVPSIPIPQIDLAATTVSVGLGPITVPHLDIPRVPVTLNYLFGSQPGGPLKIGPITGLFNTPIGLTPLALSQIVIGASSSQGTITAFLANLPFSTPVVTIDEIPLLASITGHSEPVDIFPGGLTIPAMNPLSINLSGGTGAVTIPAITIGEIPFDLVAHSTLGPVHILIDLPAVPGFGNTTGAPSSGFFNSGAGGVSGFGNVGAMVSGGWNQAPSALLGGGSGVFNAGTLHSGVLNFGSGMSGLFNTSVLGLGAPALVSGLGSVGQQLSGLLASGTALHQGLVLNFGLADVGLGNVGLGNVGDFNLGAGNVGGFNVGGGNIGGNNVGLGNVGWGNFGLGNSGLTPGLMGLGNIGFGNAGSYNFGLANMGVGNIGFANTGSGNFGIGLTGDNLTGFGGFNTGSGNVGLFNSGTGNVGFFNSGTGNWGVFNSGSYNTGIGNSGIASTGLFNAGGFNTGVVNAGSYNTGSFNAGQANTGGFNPGSVNTGWLNTGDINTGVANSGDVNTGAFISGNYSNGAFWRGDYQGLLGFSYTSTIIPEFTVANIHASGGAGPIIVPSIQFPAIPLDLSATGHIGGFTIPPVSISPITVRIDPVFDLGPITVQDITIPALGLDPATGVTVGPIFSSGSIIDPFSLTLLGFINVNVPAIQTAPSEILPFTVLLSSLGVTHLTPEITIPGFHIPVDPIHVELPLSVTIGPFVSPEITIPQLPLGLALSGATPAFAFPLEITIDRIPVVLDVNALLGPINAGLVIPPVPGFGNTTAVPSSGFFNIGGGGGLSGFHNLGAGMSGVLNAISDPLLGSASGFANFGTQLSGILNRGADISGVYNTGALGLITSALVSGFGNVGQQLAGLIYTGTGP.

Belongs to the mycobacterial PPE family.

Functionally, probably plays a role in host phagosome maturation arrest. This is an uncharacterized protein from Mycobacterium tuberculosis (strain ATCC 25618 / H37Rv).